The primary structure comprises 245 residues: Tryptophan synthase alpha chain (245 aa).

Residues Glu35 and Asp46 each act as proton acceptor in the active site.

Belongs to the TrpA family. In terms of assembly, tetramer of two alpha and two beta chains.

The enzyme catalyses (1S,2R)-1-C-(indol-3-yl)glycerol 3-phosphate + L-serine = D-glyceraldehyde 3-phosphate + L-tryptophan + H2O. It functions in the pathway amino-acid biosynthesis; L-tryptophan biosynthesis; L-tryptophan from chorismate: step 5/5. Functionally, the alpha subunit is responsible for the aldol cleavage of indoleglycerol phosphate to indole and glyceraldehyde 3-phosphate. The polypeptide is Tryptophan synthase alpha chain (Sulfurisphaera tokodaii (strain DSM 16993 / JCM 10545 / NBRC 100140 / 7) (Sulfolobus tokodaii)).